The following is a 41-amino-acid chain: Large ribosomal subunit protein bL36 (41 aa).

The protein belongs to the bacterial ribosomal protein bL36 family.

In Rhizobium rhizogenes (strain K84 / ATCC BAA-868) (Agrobacterium radiobacter), this protein is Large ribosomal subunit protein bL36.